We begin with the raw amino-acid sequence, 62 residues long: Metallothionein (62 aa).

At Met-1 the chain carries N-acetylmethionine. The segment at 1–30 (MDPQDCKCETGASCSCGTTCSCSNCKCTSC) is beta. 20 residues coordinate a divalent metal cation: Cys-6, Cys-8, Cys-14, Cys-16, Cys-20, Cys-22, Cys-25, Cys-27, Cys-30, Cys-34, Cys-35, Cys-37, Cys-38, Cys-42, Cys-45, Cys-49, Cys-51, Cys-58, Cys-60, and Cys-61. The tract at residues 31 to 62 (KKSCCSCCPAECSKCSQGCHCEKGSKKCSCCN) is alpha.

Belongs to the metallothionein superfamily. Type 1 family.

Metallothioneins have a high content of cysteine residues that bind various heavy metals. In Xenopus laevis (African clawed frog), this protein is Metallothionein (mt-a).